A 547-amino-acid chain; its full sequence is Chaperonin GroEL (547 aa).

Residues 30–33, Lys-51, 87–91, Gly-415, and Asp-496 contribute to the ATP site; these read TLGP and DGTTT. The interval 525-547 is disordered; that stretch reads KPEPKSPAGGPGMGGMGGMDGMM. Residues 533-547 show a composition bias toward gly residues; the sequence is GGPGMGGMGGMDGMM.

It belongs to the chaperonin (HSP60) family. As to quaternary structure, forms a cylinder of 14 subunits composed of two heptameric rings stacked back-to-back. Interacts with the co-chaperonin GroES.

It is found in the cytoplasm. The catalysed reaction is ATP + H2O + a folded polypeptide = ADP + phosphate + an unfolded polypeptide.. In terms of biological role, together with its co-chaperonin GroES, plays an essential role in assisting protein folding. The GroEL-GroES system forms a nano-cage that allows encapsulation of the non-native substrate proteins and provides a physical environment optimized to promote and accelerate protein folding. This is Chaperonin GroEL from Cereibacter sphaeroides (strain ATCC 17029 / ATH 2.4.9) (Rhodobacter sphaeroides).